Here is a 250-residue protein sequence, read N- to C-terminus: GTP cyclohydrolase 1 type 2 homolog (250 aa).

Positions 63, 64, 100, 218, and 222 each coordinate a divalent metal cation.

This sequence belongs to the GTP cyclohydrolase I type 2/NIF3 family. As to quaternary structure, homohexamer.

The protein is GTP cyclohydrolase 1 type 2 homolog of Pyrococcus horikoshii (strain ATCC 700860 / DSM 12428 / JCM 9974 / NBRC 100139 / OT-3).